A 302-amino-acid chain; its full sequence is ATP synthase gamma chain (302 aa).

It belongs to the ATPase gamma chain family. As to quaternary structure, F-type ATPases have 2 components, CF(1) - the catalytic core - and CF(0) - the membrane proton channel. CF(1) has five subunits: alpha(3), beta(3), gamma(1), delta(1), epsilon(1). CF(0) has three main subunits: a, b and c.

It localises to the cell membrane. Produces ATP from ADP in the presence of a proton gradient across the membrane. The gamma chain is believed to be important in regulating ATPase activity and the flow of protons through the CF(0) complex. The protein is ATP synthase gamma chain of Leuconostoc citreum (strain KM20).